The chain runs to 561 residues: MSDLQTPLVRPKRKKTWVDYFVKFRWIIVIFIVLPFSATFYFLIYLGDMWSESKSFEKRQKEHDENVKKVIKRLKGRDASKDGLVCTARKPWIAVGMRNVDYKRARHFEVDLGEFRNILEINKEKMTARVEPLVNMGQISRATVPMNLSLAVVAELDDLTVGGLINGYGIEGSSHIYGLFADTVEAYEIVLAGGELVRATRDNEYSDLYYAIPWSQGTLGLLVAAEIRLIKVKEYMRLTYIPVKGDLQALAQGYIDSFAPKDGDKSKIPDFVEGMVYNPTEGVMMVGTYASKEEAKKKGNKINNVGWWFKPWFYQHAQTALKKGQFVEYIPTREYYHRHTRCLYWEGKLILPFGDQFWFRYLLGWLMPPKVSLLKATQGEAIRNYYHDMHVIQDMLVPLYKVGDALEWVHREMEVYPIWLCPHKLFKQPIKGQIYPEPGFEYENRQGDTEDAQMYTDVGVYYAPGCVLRGEEFDGSEAVRRMEKWLIENHGFQPQYAVSELDEKSFWRMFNGELYEECRKKYRAIGTFMSVYYKSKKGRKTEKEVREAEQAHLETAYAEAD.

The Lumenal portion of the chain corresponds to 1-25 (MSDLQTPLVRPKRKKTWVDYFVKFR). Phosphoserine is present on Ser2. The chain crosses the membrane as a helical; Signal-anchor span at residues 26-46 (WIIVIFIVLPFSATFYFLIYL). The Cytoplasmic segment spans residues 47 to 561 (GDMWSESKSF…HLETAYAEAD (515 aa)). One can recognise an FAD-binding PCMH-type domain in the interval 49–232 (MWSESKSFEK…VAAEIRLIKV (184 aa)). Residues 518–539 (CRKKYRAIGTFMSVYYKSKKGR) form an interaction with calmodulin region.

It belongs to the DIMINUTO family. Interacts with calmodulin.

It localises to the microsome membrane. It catalyses the reaction lathosterol + NADP(+) = 5alpha-cholesta-7,24-dien-3beta-ol + NADPH + H(+). Plays a critical role in the general process of plant cell elongation. Involved in the synthesis of campesterol, an early precursor of brassinolide. Required for the conversion of 24-methylenecholesterol to campesterol and for the conversion of isofucosterol to sitosterol. Necessary for both the isomerization and reduction of 24-methylenecholesterol. Regulates indirectly phytochrome-mediated light responses through the modulation of brassinosteroid biosynthesis. This Arabidopsis thaliana (Mouse-ear cress) protein is Delta(24)-sterol reductase (DIM).